Consider the following 43-residue polypeptide: Protein PsbN (43 aa).

The helical transmembrane segment at 5-27 (TVFSIFISCLLLSLTGYSLYTAF) threads the bilayer.

The protein belongs to the PsbN family.

The protein localises to the plastid. Its subcellular location is the chloroplast thylakoid membrane. Functionally, may play a role in photosystem I and II biogenesis. The chain is Protein PsbN from Chlorokybus atmophyticus (Soil alga).